The following is a 276-amino-acid chain: Undecaprenyl-diphosphatase (276 aa).

Helical transmembrane passes span 1–21, 40–60, 93–113, 120–140, 154–174, 199–219, 227–247, and 255–275; these read MELY…FLPV, ALSF…LVFF, VRLA…GLIL, LFSS…FLWL, IGFG…IPGI, FLLS…ESFA, VTLL…VALL, and FYLF…AGFV.

The protein belongs to the UppP family.

The protein localises to the cell inner membrane. It carries out the reaction di-trans,octa-cis-undecaprenyl diphosphate + H2O = di-trans,octa-cis-undecaprenyl phosphate + phosphate + H(+). Its function is as follows. Catalyzes the dephosphorylation of undecaprenyl diphosphate (UPP). Confers resistance to bacitracin. This Desulforapulum autotrophicum (strain ATCC 43914 / DSM 3382 / VKM B-1955 / HRM2) (Desulfobacterium autotrophicum) protein is Undecaprenyl-diphosphatase.